A 98-amino-acid polypeptide reads, in one-letter code: NADH-ubiquinone oxidoreductase chain 4L (98 aa).

3 helical membrane-spanning segments follow: residues 1-21, 29-49, and 61-81; these read MTLI…GLLM, ALLC…LTIL, and IILL…LVMV.

Belongs to the complex I subunit 4L family. As to quaternary structure, core subunit of respiratory chain NADH dehydrogenase (Complex I) which is composed of 45 different subunits.

It is found in the mitochondrion inner membrane. It catalyses the reaction a ubiquinone + NADH + 5 H(+)(in) = a ubiquinol + NAD(+) + 4 H(+)(out). Functionally, core subunit of the mitochondrial membrane respiratory chain NADH dehydrogenase (Complex I) which catalyzes electron transfer from NADH through the respiratory chain, using ubiquinone as an electron acceptor. Part of the enzyme membrane arm which is embedded in the lipid bilayer and involved in proton translocation. The sequence is that of NADH-ubiquinone oxidoreductase chain 4L (MT-ND4L) from Eschrichtius robustus (California gray whale).